The following is a 264-amino-acid chain: Thymidylate synthase (264 aa).

Residue arginine 21 participates in dUMP binding. A (6R)-5,10-methylene-5,6,7,8-tetrahydrofolate-binding site is contributed by histidine 51. 126–127 is a dUMP binding site; it reads RR. The active-site Nucleophile is cysteine 146. DUMP is bound by residues 166 to 169, asparagine 177, and 207 to 209; these read RSCD and HLY. Aspartate 169 is a (6R)-5,10-methylene-5,6,7,8-tetrahydrofolate binding site. Residue alanine 263 coordinates (6R)-5,10-methylene-5,6,7,8-tetrahydrofolate.

It belongs to the thymidylate synthase family. Bacterial-type ThyA subfamily. In terms of assembly, homodimer.

Its subcellular location is the cytoplasm. It catalyses the reaction dUMP + (6R)-5,10-methylene-5,6,7,8-tetrahydrofolate = 7,8-dihydrofolate + dTMP. It functions in the pathway pyrimidine metabolism; dTTP biosynthesis. Catalyzes the reductive methylation of 2'-deoxyuridine-5'-monophosphate (dUMP) to 2'-deoxythymidine-5'-monophosphate (dTMP) while utilizing 5,10-methylenetetrahydrofolate (mTHF) as the methyl donor and reductant in the reaction, yielding dihydrofolate (DHF) as a by-product. This enzymatic reaction provides an intracellular de novo source of dTMP, an essential precursor for DNA biosynthesis. The sequence is that of Thymidylate synthase from Shewanella baltica (strain OS155 / ATCC BAA-1091).